A 168-amino-acid chain; its full sequence is Photosystem I assembly protein Ycf3 (168 aa).

3 TPR repeats span residues 35 to 68 (AFTY…EIDP), 72 to 105 (SYIL…NPFL), and 120 to 153 (GEQA…TPGN).

It belongs to the Ycf3 family.

The protein resides in the plastid. It is found in the chloroplast thylakoid membrane. Functionally, essential for the assembly of the photosystem I (PSI) complex. May act as a chaperone-like factor to guide the assembly of the PSI subunits. The chain is Photosystem I assembly protein Ycf3 from Calycanthus floridus var. glaucus (Eastern sweetshrub).